A 460-amino-acid chain; its full sequence is UDP-N-acetylmuramoylalanine--D-glutamate ligase (460 aa).

115-121 contributes to the ATP binding site; it reads GTDGKTT.

Belongs to the MurCDEF family.

The protein localises to the cytoplasm. The catalysed reaction is UDP-N-acetyl-alpha-D-muramoyl-L-alanine + D-glutamate + ATP = UDP-N-acetyl-alpha-D-muramoyl-L-alanyl-D-glutamate + ADP + phosphate + H(+). It participates in cell wall biogenesis; peptidoglycan biosynthesis. In terms of biological role, cell wall formation. Catalyzes the addition of glutamate to the nucleotide precursor UDP-N-acetylmuramoyl-L-alanine (UMA). In Chlorobium luteolum (strain DSM 273 / BCRC 81028 / 2530) (Pelodictyon luteolum), this protein is UDP-N-acetylmuramoylalanine--D-glutamate ligase.